A 106-amino-acid polypeptide reads, in one-letter code: ATP-dependent Clp protease adapter protein ClpS (106 aa).

The protein belongs to the ClpS family. Binds to the N-terminal domain of the chaperone ClpA.

In terms of biological role, involved in the modulation of the specificity of the ClpAP-mediated ATP-dependent protein degradation. The protein is ATP-dependent Clp protease adapter protein ClpS of Salmonella arizonae (strain ATCC BAA-731 / CDC346-86 / RSK2980).